The following is a 142-amino-acid chain: Large ribosomal subunit protein uL11 (142 aa).

This sequence belongs to the universal ribosomal protein uL11 family. Part of the ribosomal stalk of the 50S ribosomal subunit. Interacts with L10 and the large rRNA to form the base of the stalk. L10 forms an elongated spine to which L12 dimers bind in a sequential fashion forming a multimeric L10(L12)X complex. Post-translationally, one or more lysine residues are methylated.

Forms part of the ribosomal stalk which helps the ribosome interact with GTP-bound translation factors. This is Large ribosomal subunit protein uL11 from Acinetobacter baylyi (strain ATCC 33305 / BD413 / ADP1).